A 220-amino-acid polypeptide reads, in one-letter code: Guanylate kinase (220 aa).

In terms of domain architecture, Guanylate kinase-like spans 16 to 195 (GLMFVLSSPS…AFESVKAILR (180 aa)). 23–30 (SPSGAGKT) provides a ligand contact to ATP.

It belongs to the guanylate kinase family.

It localises to the cytoplasm. It catalyses the reaction GMP + ATP = GDP + ADP. Essential for recycling GMP and indirectly, cGMP. The sequence is that of Guanylate kinase from Rhodopseudomonas palustris (strain HaA2).